Here is a 167-residue protein sequence, read N- to C-terminus: Small ribosomal subunit protein uS3m (167 aa).

The N-terminal 35 residues, 1-35, are a transit peptide targeting the mitochondrion; sequence MAASVCSGLLGPRVLSWSRELPCAWRALHTSPVCA.

It belongs to the universal ribosomal protein uS3 family. Component of the mitochondrial small ribosomal subunit (mt-SSU). Mature mammalian 55S mitochondrial ribosomes consist of a small (28S) and a large (39S) subunit. The 28S small subunit contains a 12S ribosomal RNA (12S mt-rRNA) and 30 different proteins. The 39S large subunit contains a 16S rRNA (16S mt-rRNA), a copy of mitochondrial valine transfer RNA (mt-tRNA(Val)), which plays an integral structural role, and 52 different proteins.

The protein localises to the mitochondrion. The polypeptide is Small ribosomal subunit protein uS3m (MRPS24) (Homo sapiens (Human)).